The following is a 657-amino-acid chain: tRNA 5-methylaminomethyl-2-thiouridine biosynthesis bifunctional protein MnmC (657 aa).

The segment at 1–238 is tRNA (mnm(5)s(2)U34)-methyltransferase; the sequence is MPASTLLQHA…KWEVMSGEYT (238 aa). Residues 265–657 form an FAD-dependent cmnm(5)s(2)U34 oxidoreductase region; sequence IGAGLAGSAS…FGLRRLIRGK (393 aa).

The protein in the N-terminal section; belongs to the methyltransferase superfamily. tRNA (mnm(5)s(2)U34)-methyltransferase family. This sequence in the C-terminal section; belongs to the DAO family. The cofactor is FAD.

It localises to the cytoplasm. It catalyses the reaction 5-aminomethyl-2-thiouridine(34) in tRNA + S-adenosyl-L-methionine = 5-methylaminomethyl-2-thiouridine(34) in tRNA + S-adenosyl-L-homocysteine + H(+). Its function is as follows. Catalyzes the last two steps in the biosynthesis of 5-methylaminomethyl-2-thiouridine (mnm(5)s(2)U) at the wobble position (U34) in tRNA. Catalyzes the FAD-dependent demodification of cmnm(5)s(2)U34 to nm(5)s(2)U34, followed by the transfer of a methyl group from S-adenosyl-L-methionine to nm(5)s(2)U34, to form mnm(5)s(2)U34. The polypeptide is tRNA 5-methylaminomethyl-2-thiouridine biosynthesis bifunctional protein MnmC (Pseudomonas putida (strain W619)).